A 145-amino-acid chain; its full sequence is Leghemoglobin-1 (145 aa).

One can recognise a Globin domain in the interval 3–145 (AFSDKQEALV…ELAAAIKKAY (143 aa)). 2 positions are modified to nitrated tyrosine: Y26 and Y31. Heme b is bound at residue S46. At S46 the chain carries Phosphoserine. Residue H62 participates in O2 binding. Heme b-binding residues include K65, H93, and K96. Position 134 is a nitrated tyrosine (Y134).

It belongs to the plant globin family. Monomer. In terms of processing, nitrated in effective nodules and particularly in hypoxic conditions; this mechanism may play a protective role in the symbiosis by buffering toxic peroxynitrite NO(2)(-). Nitration level decrease during nodule senescence. Post-translationally, phosphorylation at Ser-46 disrupts the molecular environment of its porphyrin ring oxygen binding pocket, thus leading to a reduced oxygen consumption and to the delivery of oxygen O(2) to symbiosomes. In terms of tissue distribution, root nodules.

It localises to the cytoplasm. The protein localises to the cytosol. The protein resides in the nucleus. Its function is as follows. Leghemoglobin that reversibly binds oxygen O(2) through a pentacoordinated heme iron. In root nodules, facilitates the diffusion of oxygen to the bacteroids while preventing the bacterial nitrogenase from being inactivated by buffering dioxygen, nitric oxide and carbon monoxide, and promoting the formation of reactive oxygen species (ROS, e.g. H(2)O(2)). This role is essential for symbiotic nitrogen fixation (SNF). This chain is Leghemoglobin-1, found in Vigna unguiculata (Cowpea).